Consider the following 560-residue polypeptide: Membrane protein insertase YidC (560 aa).

Transmembrane regions (helical) follow at residues Asn-7 to Val-27, Ala-334 to Phe-354, Tyr-357 to Phe-377, Leu-431 to Ile-451, Leu-476 to Leu-496, and Phe-522 to Trp-542.

The protein belongs to the OXA1/ALB3/YidC family. Type 1 subfamily. In terms of assembly, interacts with the Sec translocase complex via SecD. Specifically interacts with transmembrane segments of nascent integral membrane proteins during membrane integration.

It is found in the cell inner membrane. Functionally, required for the insertion and/or proper folding and/or complex formation of integral membrane proteins into the membrane. Involved in integration of membrane proteins that insert both dependently and independently of the Sec translocase complex, as well as at least some lipoproteins. Aids folding of multispanning membrane proteins. The polypeptide is Membrane protein insertase YidC (Rickettsia canadensis (strain McKiel)).